A 200-amino-acid chain; its full sequence is Peptidyl-tRNA hydrolase (200 aa).

Tyr14 contacts tRNA. The active-site Proton acceptor is His19. TRNA is bound by residues Phe64, Asn66, and Asn112.

It belongs to the PTH family. In terms of assembly, monomer.

It is found in the cytoplasm. It catalyses the reaction an N-acyl-L-alpha-aminoacyl-tRNA + H2O = an N-acyl-L-amino acid + a tRNA + H(+). In terms of biological role, hydrolyzes ribosome-free peptidyl-tRNAs (with 1 or more amino acids incorporated), which drop off the ribosome during protein synthesis, or as a result of ribosome stalling. Catalyzes the release of premature peptidyl moieties from peptidyl-tRNA molecules trapped in stalled 50S ribosomal subunits, and thus maintains levels of free tRNAs and 50S ribosomes. The polypeptide is Peptidyl-tRNA hydrolase (Maricaulis maris (strain MCS10) (Caulobacter maris)).